A 1081-amino-acid chain; its full sequence is DNA-directed RNA polymerase subunit beta (1081 aa).

The protein belongs to the RNA polymerase beta chain family. As to quaternary structure, in plastids the minimal PEP RNA polymerase catalytic core is composed of four subunits: alpha, beta, beta', and beta''. When a (nuclear-encoded) sigma factor is associated with the core the holoenzyme is formed, which can initiate transcription.

The protein localises to the plastid. Its subcellular location is the chloroplast. It catalyses the reaction RNA(n) + a ribonucleoside 5'-triphosphate = RNA(n+1) + diphosphate. Its function is as follows. DNA-dependent RNA polymerase catalyzes the transcription of DNA into RNA using the four ribonucleoside triphosphates as substrates. This chain is DNA-directed RNA polymerase subunit beta, found in Cyanidium caldarium (Red alga).